The following is a 234-amino-acid chain: Inner membrane protein YbhL (234 aa).

Residues 1–23 are Periplasmic-facing; the sequence is MDRFPRSDSIVQPRAGLQTYMAQ. A helical membrane pass occupies residues 24-44; it reads VYGWMTVGLLLTAFVAWYAAN. Residues 45-56 lie on the Cytoplasmic side of the membrane; sequence SAAVMELLFTNR. The helical transmembrane segment at 57-77 threads the bilayer; it reads VFLIGLIIAQLALVIVLSAMI. Residues 78–79 lie on the Periplasmic side of the membrane; it reads QK. A helical transmembrane segment spans residues 80–100; that stretch reads LSAGVTTMLFMLYSALTGLTL. At 101 to 102 the chain is on the cytoplasmic side; the sequence is SS. The helical transmembrane segment at 103 to 123 threads the bilayer; sequence IFIVYTAASIASTFVVTAGMF. Residues 124 to 136 lie on the Periplasmic side of the membrane; sequence GAMSLYGYTTKRD. Residues 137 to 157 traverse the membrane as a helical segment; sequence LSGFGNMLFMALIGIVLASLV. At 158–163 the chain is on the cytoplasmic side; sequence NFWLKS. A helical membrane pass occupies residues 164–184; that stretch reads EALMWAVTYIGVIVFVGLTAY. Residues 185–206 lie on the Periplasmic side of the membrane; it reads DTQKLKNMGEQIDTRDTSNLRK. A helical membrane pass occupies residues 207 to 227; the sequence is YSILGALTLYLDFINLFLMLL. The Cytoplasmic portion of the chain corresponds to 228 to 234; it reads RIFGNRR.

This sequence belongs to the BI1 family.

Its subcellular location is the cell inner membrane. This Escherichia coli (strain K12) protein is Inner membrane protein YbhL (ybhL).